The primary structure comprises 161 residues: Large ribosomal subunit protein uL10 (161 aa).

The protein belongs to the universal ribosomal protein uL10 family. As to quaternary structure, part of the ribosomal stalk of the 50S ribosomal subunit. The N-terminus interacts with L11 and the large rRNA to form the base of the stalk. The C-terminus forms an elongated spine to which L12 dimers bind in a sequential fashion forming a multimeric L10(L12)X complex.

Forms part of the ribosomal stalk, playing a central role in the interaction of the ribosome with GTP-bound translation factors. This is Large ribosomal subunit protein uL10 from Campylobacter fetus subsp. fetus (strain 82-40).